Consider the following 329-residue polypeptide: Transcription factor RF2b (329 aa).

2 disordered regions span residues 1–24 (MQEP…RSEV) and 62–97 (SSGP…DGSG). The bZIP domain maps to 132–195 (DPKRAKRILA…TGLSAENAEL (64 aa)). The basic motif stretch occupies residues 134–155 (KRAKRILANRQSAARSKERKAR). The segment at 160–174 (LERKVQTLQTEATTL) is leucine-zipper. Residues 260–303 (RQNGGTQLPPQFQPPRPNVPNHMLSHPNGLQDIMQQDPLGRLQG) form a disordered region.

The protein belongs to the bZIP family. Binds DNA as a homodimer or as a heterodimer with RF2a. The heterodimer binds stronger to DNA than the homodimer. Expressed at high levels in roots, low level in leaf sheath, but not in leaf blade. Predominantly expressed in vascular tissues.

Its subcellular location is the nucleus. Functionally, transcription factor probably involved in vascular development and shoot tissue organization. Binds to the DNA sequence 5'-CCGAGTGTGCCCCTGG-3' present in the promoter region Box II of the phloem-specific rice tungro bacilliform virus (RTBV) promoter. May regulate tissue-specific expression of the RTBV promoter and virus replication. This Oryza sativa subsp. japonica (Rice) protein is Transcription factor RF2b (RF2b).